Consider the following 930-residue polypeptide: Protocadherin gamma-A4 (930 aa).

Residues 1–27 (MAAPYKSDRRGLIWICIFLGSLCDIRA) form the signal peptide. Cadherin domains follow at residues 28-132 (EQIR…APSF), 133-241 (GAQQ…APVF), 242-346 (TQPE…APEV), 347-451 (TVTS…PPTF), 452-561 (THAS…TPEI), and 569-682 (DGST…APID). The Extracellular portion of the chain corresponds to 28–691 (EQIRYSVPEE…DQEDSDITLY (664 aa)). Asn-418 and Asn-544 each carry an N-linked (GlcNAc...) asparagine glycan. Residues 692-712 (LVVAVAAVSCVFLAFVIVLLI) form a helical membrane-spanning segment. The Cytoplasmic portion of the chain corresponds to 713–930 (HRLRRWHSTR…KKKSGKKEKK (218 aa)). 2 disordered regions span residues 803–839 (SSLQ…WPNN) and 900–930 (ATLT…KEKK). Positions 920–930 (NKKKSGKKEKK) are enriched in basic residues.

Its subcellular location is the cell membrane. In terms of biological role, potential calcium-dependent cell-adhesion protein. May be involved in the establishment and maintenance of specific neuronal connections in the brain. The sequence is that of Protocadherin gamma-A4 from Mus musculus (Mouse).